Reading from the N-terminus, the 290-residue chain is Dual-specificity RNA pseudouridine synthase RluF (290 aa).

Residues 7 to 72 (VRLNKYISES…EAEDLVLIAL (66 aa)) form the S4 RNA-binding domain. Interaction with RNA regions lie at residues 105-108 (RLDK) and 187-190 (RQIR). Residue D107 is the Nucleophile of the active site. A disordered region spans residues 241-290 (SEAKPKAKAKPKTAGIKRPVVKMEKTAEKGGRPASNGKRFTSPGRKKKGR). The segment covering 261 to 271 (VKMEKTAEKGG) has biased composition (basic and acidic residues).

It belongs to the pseudouridine synthase RsuA family. In terms of assembly, monomer.

It carries out the reaction uridine(2604) in 23S rRNA = pseudouridine(2604) in 23S rRNA. The catalysed reaction is uridine(35) in tRNA(Tyr) = pseudouridine(35) in tRNA(Tyr). Its function is as follows. Dual specificity enzyme that catalyzes the synthesis of pseudouridine from uracil-2604 in 23S ribosomal RNA and from uracil-35 in the anticodon of tRNA(Tyr). The polypeptide is Dual-specificity RNA pseudouridine synthase RluF (rluF) (Escherichia coli O157:H7).